The primary structure comprises 103 residues: Acylphosphatase-2 (103 aa).

Residues 13-103 (SVDYEVFGRV…LQYNGFSTRY (91 aa)) form the Acylphosphatase-like domain. Catalysis depends on residues Arg-28 and Asn-46.

The protein belongs to the acylphosphatase family.

It catalyses the reaction an acyl phosphate + H2O = a carboxylate + phosphate + H(+). This Xenopus tropicalis (Western clawed frog) protein is Acylphosphatase-2 (acyp2).